The chain runs to 243 residues: Toxin CcTX-1 (243 aa).

The segment covering 1–25 (SSPEKKNDMSKPGRMRFDNKKEPRS) has biased composition (basic and acidic residues). Positions 1–48 (SSPEKKNDMSKPGRMRFDNKKEPRSSAKNSGNGYGCVDVNAGREPLTG) are disordered.

Post-translationally, contains disulfide bonds. Nematocytes.

The protein resides in the secreted. The protein localises to the nematocyst. Its subcellular location is the target cell membrane. Its function is as follows. Has potent hemolytic activity. Is lethal to crayfish. Causes cutaneous inflammation in humans. May act as a pore-forming toxin, disrupting normal transmembrane ion concentration gradients in susceptible cells. The sequence is that of Toxin CcTX-1 from Cyanea capillata (Lion's mane jellyfish).